The following is a 141-amino-acid chain: Cholinesterase (141 aa).

N39 carries N-linked (GlcNAc...) asparagine glycosylation. Substrate is bound at residue 49 to 50 (GS). S131 (acyl-ester intermediate) is an active-site residue. S131 carries the phosphoserine modification.

Belongs to the type-B carboxylesterase/lipase family. As to quaternary structure, homotetramer; disulfide-linked. Dimer of dimers. In terms of tissue distribution, present in most cells except erythrocytes.

Its subcellular location is the secreted. It catalyses the reaction an acylcholine + H2O = a carboxylate + choline + H(+). Functionally, esterase with broad substrate specificity. Contributes to the inactivation of the neurotransmitter acetylcholine. Can degrade neurotoxic organophosphate esters. This Ovis aries (Sheep) protein is Cholinesterase (BCHE).